An 87-amino-acid polypeptide reads, in one-letter code: Putative defensin-like protein 317 (87 aa).

An N-terminal signal peptide occupies residues 1 to 24 (MKSFLVAFLIVLVFFCVEMKIGNG). 3 cysteine pairs are disulfide-bonded: C38–C71, C47–C80, and C56–C82.

It belongs to the DEFL family.

It localises to the secreted. The polypeptide is Putative defensin-like protein 317 (Arabidopsis thaliana (Mouse-ear cress)).